The sequence spans 808 residues: Piwi-like protein 1 (808 aa).

Residues 214–333 (RINRVLNENN…IPGELCYLCG (120 aa)) form the PAZ domain. The tract at residues 300–322 (SMVRPKEKTENEPEGPTETDQSL) is disordered. The Piwi domain occupies 492 to 790 (HMALVFIPDD…LAELVGKIHR (299 aa)).

Belongs to the argonaute family. Piwi subfamily. Expressed in dividing adult somatic stem cells (neoblasts).

This Schmidtea mediterranea (Freshwater planarian flatworm) protein is Piwi-like protein 1 (wi-1).